The primary structure comprises 363 residues: Large ribosomal subunit protein uL4A (363 aa).

S87 carries the phosphoserine modification. Residues 280 to 363 are C-terminal-extended nuclear localization signal; the sequence is PENIISNADV…EKFLTVLHEN (84 aa).

The protein belongs to the universal ribosomal protein uL4 family. As to quaternary structure, component of the large ribosomal subunit (LSU). Mature yeast ribosomes consist of a small (40S) and a large (60S) subunit. The 40S small subunit contains 1 molecule of ribosomal RNA (18S rRNA) and at least 33 different proteins. The large 60S subunit contains 3 rRNA molecules (25S, 5.8S and 5S rRNA) and at least 46 different proteins. uL4 is associated with the polypeptide exit tunnel. uL4 interacts with its chaperone ACL4 and the nuclear import receptor KAP104.

It is found in the cytoplasm. The protein localises to the nucleus. Component of the ribosome, a large ribonucleoprotein complex responsible for the synthesis of proteins in the cell. The small ribosomal subunit (SSU) binds messenger RNAs (mRNAs) and translates the encoded message by selecting cognate aminoacyl-transfer RNA (tRNA) molecules. The large subunit (LSU) contains the ribosomal catalytic site termed the peptidyl transferase center (PTC), which catalyzes the formation of peptide bonds, thereby polymerizing the amino acids delivered by tRNAs into a polypeptide chain. The nascent polypeptides leave the ribosome through a tunnel in the LSU and interact with protein factors that function in enzymatic processing, targeting, and the membrane insertion of nascent chains at the exit of the ribosomal tunnel. uL4 participates in the regulation of the accumulation of its own mRNA. In Schizosaccharomyces pombe (strain 972 / ATCC 24843) (Fission yeast), this protein is Large ribosomal subunit protein uL4A (rpl402).